Consider the following 2240-residue polypeptide: MDSIKLTESHQGLSVLHAKQATETMRETLSSSSSPLSLSSITSPLSSASEPPALGEIQARVSESTLFSNAQVPEFWETCVHEVIQQRCREAPESSAVAAWDGSFTYSELDELSNRLASSLILLGVKAETFVPICMEKSRWATVAILGVMKAGGAFTLLDPSYPLPRLKTICEELSSLVVLSSTTQSERCTQLANVIVVEHLCRAWHPGAYLAQSPATVCPSNVLYVAFTSGSTGKPKGVLIEHRAYSTGAREHLRVFQIDQTSRVLQFSSYAFDVNIMETLSTLMAGGCLCVVGEAQRSDVSLFAEAVDELQVSHAMLTPSFARTVPWENVRHLRVLILGGEEMRESDAAICAERGVRLINAYGAAECSVNATARPGVQPGDNLSTIGHGTGAIAWIIDPDDPERQMGPGTAGELLLEGPIVGRGYLNSPDMTDRVFIDPPTWLRQLRMMDYQHQLYRTGDLAVQDSTGALTLLGRKEGQVKIRGQRVEVAEIEQHIDQVLTAATEVVVEKVTPECDQRDVLMAFVQTGRAAQGWTEGSPFFLPPRPASIQEFSAAQSQLREQLPSYMIPAIFIGVSCIPRTPSGKADRRLLRMTAARLSREELQAFAGSPVHSRPPTTATEHALQQLYADVLELPIMRISMEDSFVRLGGDSIMAVRLVGAARQAGLVLDIRDVLGTARLEEQARKATPVSEETPCEAYVPFSMLGSRCTDRDEVLRVAAEQCGTSPSEIEDIFPCTPLQEGMLALSSSQPQMYVGQIVFGMPEDVDVSQFKAAWQSTADATPILRTRIIHTPQGLLQVVLRGKLAWENYNEHPEACAADVGSQIGSPGAPLIRFALGDGDHRGEFTLTVHHAVWDAWTMRLIHDALERSFQGEMTKKHPFHPFIQYLQQVDGATMDDFWRTELADLEAPSFPALPSTQHRPSPTAMLRHTVEKIEVVPRIHTMASYIHLAWSLLVAHYTDSTEAVYGAIVSGRNSPVAAINELAGPTIATVPVRVRVSPEDTVSAALEQIQTCMVRMVPHEQAGLLRIAKASPDAARACSFQSHLNIQVVEQEHRLLPARRGIASTGMELTRFSSYALNLMLQLSPDNTSVTVDIAYDPQVLSAWEVDRMIHQWEHILRQICREPSGSLQELDFASPQDRDLLRLRNSETPTVDWRCLHDLVLAQEARQPSREAVSAWDGDFTYRELAELSSNFARLLNLFAVGRGSFVPICMDKSRWAIVSILAVLQAGATCVLLDPQHPRQRMQDTIAGLSVPVLVNAPSTAPVTKGLCAIELCVSAKLTEQLWTNAYGSRFQTHVDPDDLAFLIFTSGSTGVPKGIAMPHCTVSSSIYHNSAPMMFDADTRALHFSSYAFDVSIYEIFTTLASGGCVCVPSEFQRTNELADFIQQRAVNWTFLTPSTAQSLHPSEVPGVATLVLGGEAVTPDHVKTWAPGRSLINGYGPAEATICAVGPMPEHGWDPGNIGHVVGGVGWVTIPSDPSRLAAIGAIGELLLEGPFLARGYLNQHEATAASFISPPPWHRTLLPDCDAETTRLYRTGDLVQYEEDGSIRYIGRRDTQLKLRGQRIDLGEIETQLRRSFPGVHDVVAEAIQLPILQDRAALVAFIGCQEAQVTESAVGEQVLSAVDESFQHTVSLAQTRLQAILPPYMLPSVFFPLAHCPKTLTGKTDRRYLRQAVLALPPHELQRYRVAGRQKARIPVSRGPELRLQSIWADLLRIPCDDIGSDDTFLLHGGDSVAAMRMVALARRADFTFRVTDVLSNCTLSELARCTGEEPCLTDGDGTLPTTHEFESGHKMVDSPVSADYHTGMIGTELEMENDAIAVYPTTQAQSFLIKRYPWTHWRFSFHGEVSVERLRTACARLVAAHSIMRTLFVAGAGGERVRHVVMKELDIPLHTGTTHKNLVDYCQSICDAEQEMDVLEAVLPTRLTLISDALQTSHIFILRLSHAQYDGICVPKIFADLEALYNGTEPIAPTRFERYLDERRWYSGERARAFWKEYLAGSSPPCTMPVKATPPTDSDDSRPSAARSVISASQTVRCTAIPFQVTLATVVKAAACLVLARLTGRTDITVGQTVNGRSLPQPWVSEVVGPCVNYIPFRATLSESMSIQDYLVHMQSQHNRCIHYDGAELDTIIKNCTTWDPSTEFGFILQHQNIDMDLSLTLDGNRCASCASSGRLRPSNEVWICSTPSPSGVDLDVVASSQTLTADAAKNLVDDIADMIQTLLYNLETPLRDVVEFD.

Residues 22–52 (TETMRETLSSSSSPLSLSSITSPLSSASEPP) form a disordered region. Residues 28–52 (TLSSSSSPLSLSSITSPLSSASEPP) are compositionally biased toward low complexity. Residues 85 to 484 (QQRCREAPES…GRKEGQVKIR (400 aa)) are adenylation 1. A Carrier 1 domain is found at 616 to 692 (PPTTATEHAL…EQARKATPVS (77 aa)). Residue serine 653 is modified to O-(pantetheine 4'-phosphoryl)serine. A condensation 1 region spans residues 732–1144 (EDIFPCTPLQ…DFASPQDRDL (413 aa)). An adenylation 2 region spans residues 1167–1564 (QEARQPSREA…GRRDTQLKLR (398 aa)). A Carrier 2 domain is found at 1700–1776 (PVSRGPELRL…ELARCTGEEP (77 aa)). Serine 1737 is modified (O-(pantetheine 4'-phosphoryl)serine). The segment at 1845–2159 (FSFHGEVSVE…ILQHQNIDMD (315 aa)) is condensation 2. Positions 2008-2027 (CTMPVKATPPTDSDDSRPSA) are disordered.

It belongs to the NRP synthetase family.

The catalysed reaction is L-proline + L-tryptophan + 2 ATP = brevianamide F + 2 AMP + 2 diphosphate + 2 H(+). It functions in the pathway alkaloid biosynthesis. In terms of biological role, nonribisomal peptide synthetase; part of the gene cluster that mediates the biosynthesis of notoamide, a fungal indole alkaloid that belongs to a family of natural products containing a characteristic bicyclo[2.2.2]diazaoctane core. The first step of notoamide biosynthesis involves coupling of L-proline and L-tryptophan by the bimodular NRPS notE, to produce cyclo-L-tryptophan-L-proline called brevianamide F. The reverse prenyltransferase notF then acts as a deoxybrevianamide E synthase and converts brevianamide F to deoxybrevianamide E via reverse prenylation at C-2 of the indole ring leading to the bicyclo[2.2.2]diazaoctane core. Deoxybrevianamide E is further hydroxylated at C-6 of the indole ring, likely catalyzed by the cytochrome P450 monooxygenase notG, to yield 6-hydroxy-deoxybrevianamide E. 6-hydroxy-deoxybrevianamide E is a specific substrate of the prenyltransferase notC for normal prenylation at C-7 to produce 6-hydroxy-7-prenyl-deoxybrevianamide, also called notoamide S. As the proposed pivotal branching point in notoamide biosynthesis, notoamide S can be diverted to notoamide E through an oxidative pyran ring closure putatively catalyzed by either notH cytochrome P450 monooxygenase or the notD FAD-linked oxidoreductase. This step would be followed by an indole 2,3-epoxidation-initiated pinacol-like rearrangement catalyzed by the notB FAD-dependent monooxygenase leading to the formation of notoamide C and notoamide D. On the other hand notoamide S is converted to notoamide T by notH (or notD), a bifunctional oxidase that also functions as the intramolecular Diels-Alderase responsible for generation of (+)-notoamide T. To generate antipodal (-)-notoaminide T, notH' (or notD') in Aspergillus versicolor is expected to catalyze a Diels-Alder reaction leading to the opposite stereochemistry. The remaining oxidoreductase notD (or notH) likely catalyzes the oxidative pyran ring formation to yield (+)-stephacidin A. The FAD-dependent monooxygenase notI is highly similar to notB and is predicted to catalyze a similar conversion from (+)-stephacidin A to (-)-notoamide B via the 2,3-epoxidation of (+)-stephacidin A followed by a pinacol-type rearrangement. Finally, it remains unclear which enzyme could be responsible for the final hydroxylation steps leading to notoamide A and sclerotiamide. The chain is Nonribisomal peptide synthetase notE from Aspergillus sp. (strain MF297-2).